We begin with the raw amino-acid sequence, 704 residues long: Polyribonucleotide nucleotidyltransferase (704 aa).

Positions 487 and 493 each coordinate Mg(2+). In terms of domain architecture, KH spans 554–613; it reads PRLLTIKIHPDKIREVIGKGGSTIQAITKETGTQIDIQDDGTIIIASVNAIAAQAAKSRI. The region spanning 623–691 is the S1 motif domain; sequence GRIYEGKVAK…KQGRIRLSIK (69 aa).

Belongs to the polyribonucleotide nucleotidyltransferase family. As to quaternary structure, component of the RNA degradosome, which is a multiprotein complex involved in RNA processing and mRNA degradation. It depends on Mg(2+) as a cofactor.

It localises to the cytoplasm. It catalyses the reaction RNA(n+1) + phosphate = RNA(n) + a ribonucleoside 5'-diphosphate. In terms of biological role, involved in mRNA degradation. Catalyzes the phosphorolysis of single-stranded polyribonucleotides processively in the 3'- to 5'-direction. This Xanthomonas euvesicatoria pv. vesicatoria (strain 85-10) (Xanthomonas campestris pv. vesicatoria) protein is Polyribonucleotide nucleotidyltransferase.